The sequence spans 345 residues: Holliday junction branch migration complex subunit RuvB (345 aa).

The tract at residues 3–187 (LDILQNRNNL…FGFTARLDFY (185 aa)) is large ATPase domain (RuvB-L). ATP contacts are provided by residues Leu-26, Arg-27, Gly-68, Lys-71, Thr-72, Thr-73, 134–136 (EDF), Arg-177, Tyr-187, and Arg-224. Residue Thr-72 participates in Mg(2+) binding. Residues 188–259 (SPEELLQVLI…IALKAMDVYE (72 aa)) are small ATPAse domain (RuvB-S). The interval 262–345 (SLGLDRLDRA…EDLSGFELYL (84 aa)) is head domain (RuvB-H). Residues Arg-317 and Arg-322 each coordinate DNA.

The protein belongs to the RuvB family. In terms of assembly, homohexamer. Forms an RuvA(8)-RuvB(12)-Holliday junction (HJ) complex. HJ DNA is sandwiched between 2 RuvA tetramers; dsDNA enters through RuvA and exits via RuvB. An RuvB hexamer assembles on each DNA strand where it exits the tetramer. Each RuvB hexamer is contacted by two RuvA subunits (via domain III) on 2 adjacent RuvB subunits; this complex drives branch migration. In the full resolvosome a probable DNA-RuvA(4)-RuvB(12)-RuvC(2) complex forms which resolves the HJ.

The protein localises to the cytoplasm. It catalyses the reaction ATP + H2O = ADP + phosphate + H(+). Functionally, the RuvA-RuvB-RuvC complex processes Holliday junction (HJ) DNA during genetic recombination and DNA repair, while the RuvA-RuvB complex plays an important role in the rescue of blocked DNA replication forks via replication fork reversal (RFR). RuvA specifically binds to HJ cruciform DNA, conferring on it an open structure. The RuvB hexamer acts as an ATP-dependent pump, pulling dsDNA into and through the RuvAB complex. RuvB forms 2 homohexamers on either side of HJ DNA bound by 1 or 2 RuvA tetramers; 4 subunits per hexamer contact DNA at a time. Coordinated motions by a converter formed by DNA-disengaged RuvB subunits stimulates ATP hydrolysis and nucleotide exchange. Immobilization of the converter enables RuvB to convert the ATP-contained energy into a lever motion, pulling 2 nucleotides of DNA out of the RuvA tetramer per ATP hydrolyzed, thus driving DNA branch migration. The RuvB motors rotate together with the DNA substrate, which together with the progressing nucleotide cycle form the mechanistic basis for DNA recombination by continuous HJ branch migration. Branch migration allows RuvC to scan DNA until it finds its consensus sequence, where it cleaves and resolves cruciform DNA. This is Holliday junction branch migration complex subunit RuvB from Tropheryma whipplei (strain TW08/27) (Whipple's bacillus).